Consider the following 122-residue polypeptide: UPF0102 protein Ping_1176 (122 aa).

Belongs to the UPF0102 family.

The polypeptide is UPF0102 protein Ping_1176 (Psychromonas ingrahamii (strain DSM 17664 / CCUG 51855 / 37)).